Here is an 81-residue protein sequence, read N- to C-terminus: Large ribosomal subunit protein bL31B (81 aa).

This sequence belongs to the bacterial ribosomal protein bL31 family. Type B subfamily. Part of the 50S ribosomal subunit.

The chain is Large ribosomal subunit protein bL31B (rpmE2) from Lactiplantibacillus plantarum (strain ATCC BAA-793 / NCIMB 8826 / WCFS1) (Lactobacillus plantarum).